The sequence spans 1394 residues: Cyclic nucleotide-gated channel beta-1 (1394 aa).

3 disordered regions span residues 1-95, 112-253, and 271-675; these read MLGW…AHSS, VPQP…QDSA, and VIRG…SQNS. At 1–762 the chain is on the cytoplasmic side; that stretch reads MLGWVQRVLP…WKKYQFPQSI (762 aa). Composition is skewed to polar residues over residues 68–86 and 116–125; these read PQGT…QAQV and AHSSRPSQNI. Composition is skewed to basic and acidic residues over residues 300 to 312 and 336 to 355; these read EESH…VDPH and DEEK…RIQE. Acidic residues predominate over residues 356-387; it reads EKEDEEEEKEDGEEEEEEGREKEEEEGEEKEE. The segment covering 388–408 has biased composition (basic and acidic residues); sequence EEGREKEEEEGEKKEEEGREK. A compositionally biased stretch (acidic residues) spans 409–418; that stretch reads EEEEGGEKED. Residues 419 to 433 are compositionally biased toward basic and acidic residues; the sequence is EEGREKEEEEGRGKE. Acidic residues-rich tracts occupy residues 452–464 and 481–490; these read EGRE…EEEQ and DRSEESETQD. 2 stretches are compositionally biased toward low complexity: residues 493–508 and 529–554; these read EVGG…GAQA and EVGG…AQDQ. Positions 654-675 are enriched in polar residues; the sequence is DPTSPQGTDDQDRATSTASQNS. The calmodulin-binding CaM1 stretch occupies residues 671–681; sequence ASQNSAIINDR. Residues 682–692 carry the IQ-like motif; sequence LQELVKLFKER. Residues 699-732 form a disordered region; the sequence is KLIDPDVTSDEESPKPSPAKKAPEPAPEVKPAEA. The chain crosses the membrane as a helical span at residues 763–793; that stretch reads DPLTNLMYILWLFFVVLAWNWNCWLIPVRWA. The Extracellular portion of the chain corresponds to 794-798; it reads FPYQT. The helical transmembrane segment at 799 to 825 threads the bilayer; that stretch reads PDNIHLWLLMDYLCDLIYLLDITVFQM. Residues 826–837 are Cytoplasmic-facing; it reads RLQFVRGGDIIT. A helical membrane pass occupies residues 838–861; it reads DKKEMRNNYVKSQRFKMDMLCLLP. The Extracellular segment spans residues 862 to 872; sequence LDLLYLKFGVN. Residues 873–887 form a helical membrane-spanning segment; that stretch reads PLLRLPRCLKYMAFF. Topologically, residues 888-900 are cytoplasmic; the sequence is EFNNRLESILSKA. Residues 900-999 are ion conduction pathway; that stretch reads AYVYRVIRTT…IGQMRDVVGA (100 aa). Residues 901 to 922 form a helical membrane-spanning segment; the sequence is YVYRVIRTTAYLLYSLHLNSCL. The Extracellular portion of the chain corresponds to 923 to 931; that stretch reads YYWASAYEG. Helical transmembrane passes span 932–974 and 975–1002; these read LGST…EIVF and QGLN…AATA. A selectivity filter region spans residues 959–962; that stretch reads TIGG. Over 1003-1394 the chain is Cytoplasmic; it reads GQTYYRSCMD…EEARKEKEEE (392 aa). The segment at 1082-1198 is cyclic nucleotide-binding domain; that stretch reads RQMIFDMLKR…LLRKKARRML (117 aa). Residues G1143, E1144, S1146, R1156, and T1157 each coordinate 3',5'-cyclic GMP. R1156 is a binding site for 3',5'-cyclic AMP. The calmodulin-binding CaM2 stretch occupies residues 1261-1267; that stretch reads QQQLLEQ. Residues 1265-1394 are disordered; that stretch reads LEQAKSSEDA…EEARKEKEEE (130 aa). A compositionally biased stretch (pro residues) spans 1285 to 1326; it reads EQPPRPEPPAPEAPAPEPTAPEPLAPEAPAPEAPAPSSPPPA. Composition is skewed to basic and acidic residues over residues 1329–1345 and 1364–1376; these read ERPE…EHPV and VPEK…KKEE.

This sequence belongs to the cyclic nucleotide-gated cation channel (TC 1.A.1.5) family. CNGB1 subfamily. The rod cyclic nucleotide-gated channel is a heterotetramer composed of CNGA1 and CNGB1 subunits with 3:1 stoichiometry. CNGA1:CNGB1 channel binds Ca(2+)-bound CALM1 via CaM1 and CaM2 regions of the CNGB1 subunit; this interaction modulates the affinity of the channel for cNMPs in response to intracellular Ca(2+) levels. The olfactory cyclic nucleotide-gated channel is a heterotetramer composed of CNGA2, CNGA4 and CNGB1 subunits with 2:1:1 stoichiometry. Retina, testis, kidney, heart and brain.

The protein localises to the membrane. The catalysed reaction is Ca(2+)(in) = Ca(2+)(out). It carries out the reaction Na(+)(in) = Na(+)(out). The enzyme catalyses K(+)(in) = K(+)(out). It catalyses the reaction NH4(+)(in) = NH4(+)(out). The catalysed reaction is Rb(+)(in) = Rb(+)(out). It carries out the reaction Li(+)(in) = Li(+)(out). The enzyme catalyses Cs(+)(in) = Cs(+)(out). In terms of biological role, pore-forming subunit of the rod cyclic nucleotide-gated channel. Mediates rod photoresponses at dim light converting transient changes in intracellular cGMP levels into electrical signals. In the dark, cGMP levels are high and keep the channel open enabling a steady inward current carried by Na(+) and Ca(2+) ions that leads to membrane depolarization and neurotransmitter release from synaptic terminals. Upon photon absorption cGMP levels decline leading to channel closure and membrane hyperpolarization that ultimately slows neurotransmitter release and signals the presence of light, the end point of the phototransduction cascade. Pore-forming subunit of the olfactory cyclic nucleotide-gated channel. Operates in the cilia of olfactory sensory neurons where chemical stimulation of the odorant is converted to an electrical signal. Mediates odorant-induced cAMP-dependent Ca(2+) influx triggering neuron depolarization. The rise of intracellular Ca(2+) levels potentiates the olfactory response by activating Ca(2+)-dependent Cl(-) channels, but it also serves as a negative feedback signal to desensitize the channel for rapid adaptation to odorants. Conducts cGMP- and cAMP-gated ion currents, with permeability for monovalent and divalent cations. The selectivity for Ca(2+) over Na(+) increases with cGMP concentrations, whereas the selectivity among monovalent ions is independent of the cGMP levels. This chain is Cyclic nucleotide-gated channel beta-1, found in Bos taurus (Bovine).